A 1370-amino-acid polypeptide reads, in one-letter code: DNA-directed RNA polymerase subunit beta (1370 aa).

Belongs to the RNA polymerase beta chain family. As to quaternary structure, the RNAP catalytic core consists of 2 alpha, 1 beta, 1 beta' and 1 omega subunit. When a sigma factor is associated with the core the holoenzyme is formed, which can initiate transcription.

It catalyses the reaction RNA(n) + a ribonucleoside 5'-triphosphate = RNA(n+1) + diphosphate. Its function is as follows. DNA-dependent RNA polymerase catalyzes the transcription of DNA into RNA using the four ribonucleoside triphosphates as substrates. This is DNA-directed RNA polymerase subunit beta from Bordetella bronchiseptica (strain ATCC BAA-588 / NCTC 13252 / RB50) (Alcaligenes bronchisepticus).